The following is a 136-amino-acid chain: ATP synthase epsilon chain (136 aa).

The disordered stretch occupies residues Asp88–Asp136.

It belongs to the ATPase epsilon chain family. In terms of assembly, F-type ATPases have 2 components, CF(1) - the catalytic core - and CF(0) - the membrane proton channel. CF(1) has five subunits: alpha(3), beta(3), gamma(1), delta(1), epsilon(1). CF(0) has three main subunits: a, b and c.

It localises to the cellular thylakoid membrane. In terms of biological role, produces ATP from ADP in the presence of a proton gradient across the membrane. This Synechococcus sp. (strain WH7803) protein is ATP synthase epsilon chain.